Reading from the N-terminus, the 519-residue chain is Molybdate transporter 1 (519 aa).

The next 7 membrane-spanning stretches (helical) occupy residues 98–118 (LLHA…SQAI), 164–184 (LGTE…ATTL), 370–390 (AVAL…AMPC), 412–432 (ILLG…LVVL), 436–456 (FPQP…ASVV), 464–484 (GYTF…TGTG), and 485–505 (FLVG…VAAA).

This sequence belongs to the SLC26A/SulP transporter (TC 2.A.53) family.

It is found in the membrane. 60% inhibition by 20 uM tungstate or by lack of glucose in the medium, but no inhibition by sulfate. Its function is as follows. High affinity molybdate transporter. Acts through an energy-dependent process. The sequence is that of Molybdate transporter 1 (MOT1) from Chlamydomonas reinhardtii (Chlamydomonas smithii).